Consider the following 502-residue polypeptide: Probable RNA exonuclease C9B6.11c (502 aa).

The disordered stretch occupies residues 338-379 (SELEEKNASTKTENDSNEDDKEECQSSSTSSVPESTASTPKK). The span at 341 to 351 (EEKNASTKTEN) shows a compositional bias: basic and acidic residues. Positions 363–376 (SSSTSSVPESTAST) are enriched in low complexity.

It belongs to the CCR4/nocturin family.

The protein resides in the cytoplasm. It is found in the nucleus. In Schizosaccharomyces pombe (strain 972 / ATCC 24843) (Fission yeast), this protein is Probable RNA exonuclease C9B6.11c.